Consider the following 228-residue polypeptide: Type II methyltransferase M.HhaII (228 aa).

It belongs to the N(4)/N(6)-methyltransferase family.

It carries out the reaction a 2'-deoxyadenosine in DNA + S-adenosyl-L-methionine = an N(6)-methyl-2'-deoxyadenosine in DNA + S-adenosyl-L-homocysteine + H(+). Its function is as follows. A beta subtype methylase, recognizes the double-stranded sequence 5'-GANTC-3', methylates A-2 on both strands, and protects the DNA from cleavage by the HhaII endonuclease. The sequence is that of Type II methyltransferase M.HhaII from Haemophilus parahaemolyticus.